The sequence spans 1305 residues: DNA-directed DNA polymerase (1305 aa).

The protein belongs to the DNA polymerase type-C family.

The catalysed reaction is DNA(n) + a 2'-deoxyribonucleoside 5'-triphosphate = DNA(n+1) + diphosphate. Functionally, replicates viral genomic DNA. The sequence is that of DNA-directed DNA polymerase from Bacillus pumilus (Bacillus mesentericus).